We begin with the raw amino-acid sequence, 90 residues long: DNA-directed RNA polymerase subunit omega (90 aa).

The protein belongs to the RNA polymerase subunit omega family. As to quaternary structure, the RNAP catalytic core consists of 2 alpha, 1 beta, 1 beta' and 1 omega subunit. When a sigma factor is associated with the core the holoenzyme is formed, which can initiate transcription.

It carries out the reaction RNA(n) + a ribonucleoside 5'-triphosphate = RNA(n+1) + diphosphate. Functionally, promotes RNA polymerase assembly. Latches the N- and C-terminal regions of the beta' subunit thereby facilitating its interaction with the beta and alpha subunits. This Hamiltonella defensa subsp. Acyrthosiphon pisum (strain 5AT) protein is DNA-directed RNA polymerase subunit omega.